Here is a 329-residue protein sequence, read N- to C-terminus: MKVLWAALVVALLAGCWADVEPESPLEENLEPELEPKRELEQEVEPEAGWQAGQPWELALARFWDYLRWVQTLSDQVQEEVLSNQVTQELTTLMEETMKEIKAYRAELEEQLGPMASETQARVAKELQAAQARLRSDMEDVRTRLSQYRGEVQAMLGQSTEELRARFASHMRKLRKRVLRDAEDLQKRLAVYRAGVREGAERSVSTIRERLWPLLEQARTRHAKVDALATQPLRERVNALGQQLRGRLEEVGSRARSHLDEVREQMEEVQAKMEEQANQMRQQAEAFQARLKGWFEPLVEDMQRQWAVLVEKVQAAVGTSPTTPPVETK.

A signal peptide spans 1-18 (MKVLWAALVVALLAGCWA). 8 consecutive repeat copies span residues 92–113 (TLMEETMKEIKAYRAELEEQLG), 114–135 (PMASETQARVAKELQAAQARLR), 136–157 (SDMEDVRTRLSQYRGEVQAMLG), 158–179 (QSTEELRARFASHMRKLRKRVL), 180–201 (RDAEDLQKRLAVYRAGVREGAE), 202–223 (RSVSTIRERLWPLLEQARTRHA), 224–245 (KVDALATQPLRERVNALGQQLR), and 246–267 (GRLEEVGSRARSHLDEVREQME). Positions 92–267 (TLMEETMKEI…HLDEVREQME (176 aa)) are 8 X 22 AA approximate tandem repeats. Met-155 is modified (methionine sulfoxide). Ser-159 is modified (phosphoserine). Residues 170-180 (HMRKLRKRVLR) are LDL and other lipoprotein receptors binding. 174-177 (LRKR) lines the heparin pocket. Residues 222–302 (HAKVDALATQ…GWFEPLVEDM (81 aa)) are lipid-binding and lipoprotein association. 241–248 (GQQLRGRL) is a heparin binding site. The tract at residues 278–329 (NQMRQQAEAFQARLKGWFEPLVEDMQRQWAVLVEKVQAAVGTSPTTPPVETK) is homooligomerization. The interval 290–302 (RLKGWFEPLVEDM) is specificity for association with VLDL.

The protein belongs to the apolipoprotein A1/A4/E family. Homotetramer. May interact with ABCA1; functionally associated with ABCA1 in the biogenesis of HDLs. May interact with APP/A4 amyloid-beta peptide; the interaction is extremely stable in vitro but its physiological significance is unclear. May interact with MAPT. May interact with MAP2. In the cerebrospinal fluid, interacts with secreted SORL1. Interacts with PMEL; this allows the loading of PMEL luminal fragment on ILVs to induce fibril nucleation. In terms of processing, APOE exists as multiple glycosylated and sialylated glycoforms within cells and in plasma. The extent of glycosylation and sialylation are tissue and context specific. Glycated in plasma VLDL. Post-translationally, phosphorylated by FAM20C in the extracellular medium.

It is found in the secreted. Its subcellular location is the extracellular space. The protein localises to the extracellular matrix. The protein resides in the extracellular vesicle. It localises to the endosome. It is found in the multivesicular body. APOE is an apolipoprotein, a protein associating with lipid particles, that mainly functions in lipoprotein-mediated lipid transport between organs via the plasma and interstitial fluids. APOE is a core component of plasma lipoproteins and is involved in their production, conversion and clearance. Apolipoproteins are amphipathic molecules that interact both with lipids of the lipoprotein particle core and the aqueous environment of the plasma. As such, APOE associates with chylomicrons, chylomicron remnants, very low density lipoproteins (VLDL) and intermediate density lipoproteins (IDL) but shows a preferential binding to high-density lipoproteins (HDL). It also binds a wide range of cellular receptors including the LDL receptor/LDLR, the LDL receptor-related proteins LRP1, LRP2 and LRP8 and the very low-density lipoprotein receptor/VLDLR that mediate the cellular uptake of the APOE-containing lipoprotein particles. Finally, APOE also has a heparin-binding activity and binds heparan-sulfate proteoglycans on the surface of cells, a property that supports the capture and the receptor-mediated uptake of APOE-containing lipoproteins by cells. A main function of APOE is to mediate lipoprotein clearance through the uptake of chylomicrons, VLDLs, and HDLs by hepatocytes. APOE is also involved in the biosynthesis by the liver of VLDLs as well as their uptake by peripheral tissues ensuring the delivery of triglycerides and energy storage in muscle, heart and adipose tissues. By participating in the lipoprotein-mediated distribution of lipids among tissues, APOE plays a critical role in plasma and tissues lipid homeostasis. APOE is also involved in two steps of reverse cholesterol transport, the HDLs-mediated transport of cholesterol from peripheral tissues to the liver, and thereby plays an important role in cholesterol homeostasis. First, it is functionally associated with ABCA1 in the biogenesis of HDLs in tissues. Second, it is enriched in circulating HDLs and mediates their uptake by hepatocytes. APOE also plays an important role in lipid transport in the central nervous system, regulating neuron survival and sprouting. The sequence is that of Apolipoprotein E (APOE) from Eumetopias jubatus (Steller sea lion).